Consider the following 358-residue polypeptide: Peptide chain release factor 1 (358 aa).

Gln236 carries the N5-methylglutamine modification.

The protein belongs to the prokaryotic/mitochondrial release factor family. In terms of processing, methylated by PrmC. Methylation increases the termination efficiency of RF1.

Its subcellular location is the cytoplasm. In terms of biological role, peptide chain release factor 1 directs the termination of translation in response to the peptide chain termination codons UAG and UAA. In Corynebacterium glutamicum (strain ATCC 13032 / DSM 20300 / JCM 1318 / BCRC 11384 / CCUG 27702 / LMG 3730 / NBRC 12168 / NCIMB 10025 / NRRL B-2784 / 534), this protein is Peptide chain release factor 1.